The primary structure comprises 428 residues: Serine--tRNA ligase (428 aa).

L-serine is bound at residue 231 to 233 (TSE). Residues 262–264 (RRE) and V278 contribute to the ATP site. L-serine is bound at residue E285. 349–352 (ELTS) contacts ATP. T384 serves as a coordination point for L-serine.

The protein belongs to the class-II aminoacyl-tRNA synthetase family. Type-1 seryl-tRNA synthetase subfamily. In terms of assembly, homodimer. The tRNA molecule binds across the dimer.

Its subcellular location is the cytoplasm. It catalyses the reaction tRNA(Ser) + L-serine + ATP = L-seryl-tRNA(Ser) + AMP + diphosphate + H(+). It carries out the reaction tRNA(Sec) + L-serine + ATP = L-seryl-tRNA(Sec) + AMP + diphosphate + H(+). It functions in the pathway aminoacyl-tRNA biosynthesis; selenocysteinyl-tRNA(Sec) biosynthesis; L-seryl-tRNA(Sec) from L-serine and tRNA(Sec): step 1/1. Functionally, catalyzes the attachment of serine to tRNA(Ser). Is also able to aminoacylate tRNA(Sec) with serine, to form the misacylated tRNA L-seryl-tRNA(Sec), which will be further converted into selenocysteinyl-tRNA(Sec). The protein is Serine--tRNA ligase of Bifidobacterium longum subsp. infantis (strain ATCC 15697 / DSM 20088 / JCM 1222 / NCTC 11817 / S12).